A 581-amino-acid polypeptide reads, in one-letter code: Suppressor of cytokine signaling 7 (581 aa).

4 disordered regions span residues 1-23, 89-109, 123-272, and 297-316; these read MVFR…EPGP, PPPP…DPTE, EAES…RTQS, and QRGL…RRSL. 3 stretches are compositionally biased toward pro residues: residues 89–99, 154–164, and 187–198; these read PPPPQPQPPAA, PPGPELPPVPF, and QPPPPPPPPGPL. The interval 124–494 is mediates interaction with SORBS3; sequence AESLETNSCS…GKFLYFLRSR (371 aa). The segment covering 208-219 has biased composition (basic residues); it reads GSFKIRLSRLFR. Residues 303–313 show a composition bias toward pro residues; the sequence is PHPPTPPPPPR. Positions 400–509 constitute an SH2 domain; that stretch reads WYWGPMNWED…PTPVQLLYPV (110 aa). The SOCS box domain occupies 504–554; that stretch reads QLLYPVSRFSNVKSLQHLCRFRIRQLVRIDHIPDLPLPKPLISYIRKFYYY.

Substrate-recognition component of the ECS(SOCS7) complex, composed of SOCS7, CUL5, ELOB, ELOC and RNF7/RBX2. Interacts, via the third proline-rich region, with the second SH3 domain of the adapter protein NCK1. Also interacts with GRB2, INSR, PLCG1, SORBS3/vinexin, and phosphorylated STAT3 and STAT5. Interacts with SEPT6. Interacts with phosphorylated IRS4 and PIK3R1. In terms of tissue distribution, expressed in brain and leukocytes. Also in fetal lung fibroblasts and fetal brain.

The protein localises to the cytoplasm. Its subcellular location is the nucleus. It is found in the cell membrane. Its pathway is protein modification; protein ubiquitination. Its function is as follows. Substrate-recognition component of a cullin-5-RING E3 ubiquitin-protein ligase complex (ECS complex, also named CRL5 complex), which mediates the ubiquitination and subsequent proteasomal degradation of target proteins, such as DAB1 and IRS1. Specifically recognizes and binds phosphorylated proteins via its SH2 domain, promoting their ubiquitination. The ECS(SOCS7) complex acts as a key regulator of reelin signaling by mediating ubiquitination and degradation of phosphorylated DAB1 in the cortical plate of the developing cerebral cortex, thereby regulating neuron positioning during cortex development. Functions in insulin signaling and glucose homeostasis through IRS1 ubiquitination and subsequent proteasomal degradation. Also inhibits prolactin, growth hormone and leptin signaling by preventing STAT3 and STAT5 activation, sequestering them in the cytoplasm and reducing their binding to DNA. This is Suppressor of cytokine signaling 7 from Homo sapiens (Human).